The following is an 86-amino-acid chain: Small muscular protein (86 aa).

A disordered region spans residues 20 to 64; that stretch reads MGAFRPGAGQPPRRKECTPEVEEGVPPTSDEEKKPIPGAKKLPGP.

The protein belongs to the SMPX family.

Plays a role in the regulatory network through which muscle cells coordinate their structural and functional states during growth, adaptation, and repair. This is Small muscular protein (SMPX) from Pongo abelii (Sumatran orangutan).